A 767-amino-acid polypeptide reads, in one-letter code: E3 ubiquitin-protein ligase pub1 (767 aa).

The 111-residue stretch at 1–111 (MSNSAQSRRI…AIGGDEMLTR (111 aa)) folds into the C2 domain. Over residues 138–158 (LQVPSSAASGARTQRTSITND) the composition is skewed to polar residues. Disordered regions lie at residues 138-216 (LQVP…RRTD) and 252-306 (SASS…RPYF). T156 carries the post-translational modification Phosphothreonine. Residues 159–176 (PQSSQSSSVSRNPASSRA) show a composition bias toward low complexity. S178 bears the Phosphoserine mark. The residue at position 180 (T180) is a Phosphothreonine. The span at 184–194 (APAASPASSEP) shows a compositional bias: low complexity. Positions 211-236 (WERRTDNLGRTYYVDHNTRSTTWIRP) constitute a WW 1 domain. The segment covering 257 to 286 (NVTEGVQPSSSNAARRTEASVLTSNATTAG) has biased composition (polar residues). WW domains lie at 294 to 319 (WEQR…WVDP) and 351 to 376 (WEMR…WDDP). Residues 463–767 (FLLSHEMFNP…VEETIGFGQE (305 aa)) enclose the HECT domain. The active-site Glycyl thioester intermediate is C735.

Its subcellular location is the membrane. The protein localises to the cytoplasm. It catalyses the reaction S-ubiquitinyl-[E2 ubiquitin-conjugating enzyme]-L-cysteine + [acceptor protein]-L-lysine = [E2 ubiquitin-conjugating enzyme]-L-cysteine + N(6)-ubiquitinyl-[acceptor protein]-L-lysine.. The protein operates within protein modification; protein ubiquitination. E3 ubiquitin-protein ligase which accepts ubiquitin from an E2 ubiquitin-conjugating enzyme in the form of a thioester and then directly transfers the ubiquitin to targeted substrates. Regulates ubiquitination of cdc25. The chain is E3 ubiquitin-protein ligase pub1 (pub1) from Schizosaccharomyces pombe (strain 972 / ATCC 24843) (Fission yeast).